The sequence spans 249 residues: tRNA 2'-phosphotransferase 1 (249 aa).

Methionine 1 carries the N-acetylmethionine modification. Disordered regions lie at residues 1–25 (MNAP…RNVQ) and 220–249 (KPLS…KIQQ).

The protein belongs to the KptA/TPT1 family.

The enzyme catalyses 2'-phospho-[ligated tRNA] + NAD(+) = mature tRNA + ADP-alpha-D-ribose 1'',2''-cyclic phosphate + nicotinamide. In terms of biological role, catalyzes the last step of tRNA splicing, the transfer of the splice junction 2'-phosphate from ligated tRNA to NAD to produce ADP-ribose 1''-2'' cyclic phosphate. The polypeptide is tRNA 2'-phosphotransferase 1 (Trpt1) (Mus musculus (Mouse)).